The sequence spans 366 residues: Galactose-1-phosphate uridylyltransferase (366 aa).

Residue Ser27 is modified to Phosphoserine. Zn(2+)-binding residues include Cys54 and Cys57. UDP-alpha-D-glucose-binding positions include Ala63 and 79–80 (ND). His124 contributes to the Zn(2+) binding site. Asn169 contributes to the UDP-alpha-D-glucose binding site. His180 contacts Zn(2+). His182 (tele-UMP-histidine intermediate) is an active-site residue. Gln184 contacts UDP-alpha-D-glucose. The Fe cation site is built by Glu198, His297, His314, and His316. UDP-alpha-D-glucose-binding positions include 329 to 332 (KFLV) and 334 to 335 (FE).

This sequence belongs to the galactose-1-phosphate uridylyltransferase type 1 family. Homodimer. The cofactor is Zn(2+).

It catalyses the reaction alpha-D-galactose 1-phosphate + UDP-alpha-D-glucose = alpha-D-glucose 1-phosphate + UDP-alpha-D-galactose. Its pathway is carbohydrate metabolism; galactose metabolism. This is Galactose-1-phosphate uridylyltransferase (GAL7) from Saccharomyces cerevisiae (strain ATCC 204508 / S288c) (Baker's yeast).